We begin with the raw amino-acid sequence, 192 residues long: MNAIWIAVAAVSLLGLAFGAILGYASRRFAVEDDPVVEKIDEILPQSQCGQCGYPGCRPYAEAISCNGEKINRCAPGGEAVMLKIAELLNVEPQPLDGEAQELTPARMVAVIDENNCIGCTKCIQACPVDAIVGATRAMHTVMSDLCTGCNLCVDPCPTHCISLQPVAETPDSWKWDLNTIPVRIIPVEHHA.

The tract at residues 1-26 (MNAIWIAVAAVSLLGLAFGAILGYAS) is hydrophobic. Residues 32–91 (EDDPVVEKIDEILPQSQCGQCGYPGCRPYAEAISCNGEKINRCAPGGEAVMLKIAELLNV) enclose the 4Fe-4S domain. [4Fe-4S] cluster-binding residues include cysteine 49, cysteine 52, cysteine 57, cysteine 74, cysteine 117, cysteine 120, cysteine 123, cysteine 127, cysteine 147, cysteine 150, cysteine 153, and cysteine 157. 4Fe-4S ferredoxin-type domains are found at residues 108 to 137 (MVAV…GATR) and 138 to 167 (AMHT…LQPV).

Belongs to the 4Fe4S bacterial-type ferredoxin family. RnfB subfamily. In terms of assembly, the complex is composed of six subunits: RsxA, RsxB, RsxC, RsxD, RsxE and RsxG. [4Fe-4S] cluster is required as a cofactor.

The protein localises to the cell inner membrane. Part of a membrane-bound complex that couples electron transfer with translocation of ions across the membrane. Required to maintain the reduced state of SoxR. This Escherichia coli O139:H28 (strain E24377A / ETEC) protein is Ion-translocating oxidoreductase complex subunit B.